Here is a 159-residue protein sequence, read N- to C-terminus: UPF0303 protein Ping_1243 (159 aa).

Belongs to the UPF0303 family.

In Psychromonas ingrahamii (strain DSM 17664 / CCUG 51855 / 37), this protein is UPF0303 protein Ping_1243.